The primary structure comprises 425 residues: Receptor-like protein 55 (425 aa).

The N-terminal stretch at 1–25 is a signal peptide; the sequence is MKPQQPQPPLLLLLLLPLLLTTVSS. Residues 26–397 are Extracellular-facing; sequence YPLNPKQLKA…EEEHKGSNKT (372 aa). Residues Asn-40, Asn-54, Asn-79, and Asn-132 are each glycosylated (N-linked (GlcNAc...) asparagine). LRR repeat units follow at residues 144–169, 170–193, 195–216, 217–240, 242–264, 265–287, and 288–313; these read LKNLKTLYISSTPIQTSRRLYVILGN, MHKLTSLTISNSNLTGLIPKSFHS, LRYIDLSNNSLKGSIRISITRL, KNLKSLNLSHNSLSGQIPNKIKSL, FLKNLSLASNKLSGTIPNSLSSI, SELTHLDLSMNQLNGTVPSFFSE, and MKNLKHLNLADNSFHGVLPFNESFIK. N-linked (GlcNAc...) asparagine glycans are attached at residues Asn-182, Asn-202, Asn-223, Asn-245, Asn-278, Asn-308, and Asn-329. Residues 355–389 are disordered; it reads PSQKEESLSGENDYDVEGGNEEKTENLKTKEEEEE. Basic and acidic residues predominate over residues 374–389; the sequence is NEEKTENLKTKEEEEE. Asn-395 carries N-linked (GlcNAc...) asparagine glycosylation. Residues 398-418 form a helical membrane-spanning segment; the sequence is LFGLGIGLFSLVFLILFLFYL. Topologically, residues 419–425 are cytoplasmic; that stretch reads AKRCRLI.

Belongs to the RLP family.

The protein localises to the cell membrane. Functionally, involved in plant defense. This Arabidopsis thaliana (Mouse-ear cress) protein is Receptor-like protein 55.